The sequence spans 264 residues: Cell division protein FtsQ (264 aa).

The tract at residues 1–24 (MAGPTTAERGDRQQESSGPPPARW) is disordered. Topologically, residues 1-31 (MAGPTTAERGDRQQESSGPPPARWSGTRRLR) are cytoplasmic. The helical transmembrane segment at 32–52 (ALVVLAALLVLLAGGCAWLLY) threads the bilayer. The Extracellular portion of the chain corresponds to 53–264 (GSSWLRLERV…VPTAPASSGS (212 aa)). The POTRA domain maps to 57-126 (LRLERVSVSG…HGIGLKVTER (70 aa)).

The protein belongs to the FtsQ/DivIB family. FtsQ subfamily.

Its subcellular location is the cell membrane. Functionally, essential cell division protein. The polypeptide is Cell division protein FtsQ (Streptomyces collinus).